Reading from the N-terminus, the 599-residue chain is Elongation factor 4 (599 aa).

In terms of domain architecture, tr-type G spans 2–184; that stretch reads KNIRNFSIIA…RLVRDIPPPE (183 aa). Residues 14 to 19 and 131 to 134 each bind GTP; these read DHGKST and NKID.

This sequence belongs to the TRAFAC class translation factor GTPase superfamily. Classic translation factor GTPase family. LepA subfamily.

Its subcellular location is the cell inner membrane. The enzyme catalyses GTP + H2O = GDP + phosphate + H(+). Functionally, required for accurate and efficient protein synthesis under certain stress conditions. May act as a fidelity factor of the translation reaction, by catalyzing a one-codon backward translocation of tRNAs on improperly translocated ribosomes. Back-translocation proceeds from a post-translocation (POST) complex to a pre-translocation (PRE) complex, thus giving elongation factor G a second chance to translocate the tRNAs correctly. Binds to ribosomes in a GTP-dependent manner. In Escherichia fergusonii (strain ATCC 35469 / DSM 13698 / CCUG 18766 / IAM 14443 / JCM 21226 / LMG 7866 / NBRC 102419 / NCTC 12128 / CDC 0568-73), this protein is Elongation factor 4.